A 504-amino-acid polypeptide reads, in one-letter code: Deoxyguanosinetriphosphate triphosphohydrolase (504 aa).

Positions 66–273 (RLTHSLEVQQ…MEAADDISYC (208 aa)) constitute an HD domain.

It belongs to the dGTPase family. Type 1 subfamily. In terms of assembly, homotetramer. Mg(2+) serves as cofactor.

It catalyses the reaction dGTP + H2O = 2'-deoxyguanosine + triphosphate + H(+). Its function is as follows. dGTPase preferentially hydrolyzes dGTP over the other canonical NTPs. The polypeptide is Deoxyguanosinetriphosphate triphosphohydrolase (Klebsiella pneumoniae subsp. pneumoniae (strain ATCC 700721 / MGH 78578)).